A 64-amino-acid chain; its full sequence is Tracheal antimicrobial peptide (64 aa).

The signal sequence occupies residues 1-26 (MRLHHLLLALLFLVLSAWSGFTQGVG). Cystine bridges form between Cys-31–Cys-60, Cys-38–Cys-53, and Cys-43–Cys-61.

This sequence belongs to the beta-defensin family. LAP/TAP subfamily. In terms of tissue distribution, tracheal epithelium.

The protein localises to the secreted. Its function is as follows. Has antibacterial activity in vitro against Escherichia coli, Staphylococcus aureus, Klebsiella pneumonia, and Pseudomonas aeruginosa. In addition, the peptide is active against Candida albicans, indicating a broad spectrum of activity. This Bos taurus (Bovine) protein is Tracheal antimicrobial peptide.